A 361-amino-acid chain; its full sequence is Molybdenum import ATP-binding protein ModC (361 aa).

Residues 1 to 235 (MDGLRLRFRR…VDLPLALDDD (235 aa)) form the ABC transporter domain. 33-40 (GHSGSGKS) contributes to the ATP binding site. One can recognise a Mop domain in the interval 296-361 (QSSILNRLPV…AQIKSVAVLA (66 aa)).

This sequence belongs to the ABC transporter superfamily. Molybdate importer (TC 3.A.1.8) family. The complex is composed of two ATP-binding proteins (ModC), two transmembrane proteins (ModB) and a solute-binding protein (ModA).

It is found in the cell inner membrane. The enzyme catalyses molybdate(out) + ATP + H2O = molybdate(in) + ADP + phosphate + H(+). Its function is as follows. Part of the ABC transporter complex ModABC involved in molybdenum import. Responsible for energy coupling to the transport system. This chain is Molybdenum import ATP-binding protein ModC, found in Pseudomonas aeruginosa (strain ATCC 15692 / DSM 22644 / CIP 104116 / JCM 14847 / LMG 12228 / 1C / PRS 101 / PAO1).